Consider the following 178-residue polypeptide: Interleukin-10 (178 aa).

The first 18 residues, 1-18 (MHSSALLCYLVFLAGVGA), serve as a signal peptide directing secretion. Disulfide bonds link Cys30–Cys126 and Cys80–Cys132. An N-linked (GlcNAc...) asparagine glycan is attached at Asn67. An N-linked (GlcNAc...) asparagine glycan is attached at Asn134.

This sequence belongs to the IL-10 family. In terms of assembly, homodimer. Interacts with IL10RA and IL10RB.

The protein resides in the secreted. In terms of biological role, major immune regulatory cytokine that acts on many cells of the immune system where it has profound anti-inflammatory functions, limiting excessive tissue disruption caused by inflammation. Mechanistically, IL10 binds to its heterotetrameric receptor comprising IL10RA and IL10RB leading to JAK1 and STAT2-mediated phosphorylation of STAT3. In turn, STAT3 translocates to the nucleus where it drives expression of anti-inflammatory mediators. Targets antigen-presenting cells (APCs) such as macrophages and monocytes and inhibits their release of pro-inflammatory cytokines including granulocyte-macrophage colony-stimulating factor /GM-CSF, granulocyte colony-stimulating factor/G-CSF, IL-1 alpha, IL-1 beta, IL-6, IL-8 and TNF-alpha. Also interferes with antigen presentation by reducing the expression of MHC-class II and co-stimulatory molecules, thereby inhibiting their ability to induce T cell activation. In addition, controls the inflammatory response of macrophages by reprogramming essential metabolic pathways including mTOR signaling. The protein is Interleukin-10 (IL10) of Equus caballus (Horse).